We begin with the raw amino-acid sequence, 276 residues long: Apulose-4-phosphate transketolase subunit A (276 aa).

This sequence belongs to the transketolase family. As to quaternary structure, probable heterodimer composed of AptA and AptB. The cofactor is thiamine diphosphate.

It carries out the reaction apulose 4-phosphate + D-glyceraldehyde 3-phosphate = D-xylulose 5-phosphate + dihydroxyacetone phosphate. The protein operates within carbohydrate metabolism. Functionally, involved in catabolism of D-apiose. Catalyzes the transfer of the glycolaldehyde group from apulose-4-phosphate to D-glyceraldehyde 3-phosphate, generating dihydroxyacetone phosphate and D-xylulose-5-phosphate. The protein is Apulose-4-phosphate transketolase subunit A of Actinobacillus succinogenes (strain ATCC 55618 / DSM 22257 / CCUG 43843 / 130Z).